The following is a 113-amino-acid chain: Hydrogenase maturation factor HypA (113 aa).

Position 2 (histidine 2) interacts with Ni(2+). Zn(2+) is bound by residues cysteine 73, cysteine 76, cysteine 89, and cysteine 92.

Belongs to the HypA/HybF family.

Involved in the maturation of [NiFe] hydrogenases. Required for nickel insertion into the metal center of the hydrogenase. This Rhodobacter capsulatus (Rhodopseudomonas capsulata) protein is Hydrogenase maturation factor HypA.